Here is a 236-residue protein sequence, read N- to C-terminus: Phosphoribosylaminoimidazole-succinocarboxamide synthase (236 aa).

The protein belongs to the SAICAR synthetase family.

The catalysed reaction is 5-amino-1-(5-phospho-D-ribosyl)imidazole-4-carboxylate + L-aspartate + ATP = (2S)-2-[5-amino-1-(5-phospho-beta-D-ribosyl)imidazole-4-carboxamido]succinate + ADP + phosphate + 2 H(+). It participates in purine metabolism; IMP biosynthesis via de novo pathway; 5-amino-1-(5-phospho-D-ribosyl)imidazole-4-carboxamide from 5-amino-1-(5-phospho-D-ribosyl)imidazole-4-carboxylate: step 1/2. This is Phosphoribosylaminoimidazole-succinocarboxamide synthase from Pseudomonas syringae pv. tomato (strain ATCC BAA-871 / DC3000).